Consider the following 608-residue polypeptide: Glutamyl-tRNA(Gln) amidotransferase subunit E (608 aa).

The interval Glu-402 to Ala-422 is disordered.

Belongs to the GatB/GatE family. GatE subfamily. Heterodimer of GatD and GatE.

The catalysed reaction is L-glutamyl-tRNA(Gln) + L-glutamine + ATP + H2O = L-glutaminyl-tRNA(Gln) + L-glutamate + ADP + phosphate + H(+). In terms of biological role, allows the formation of correctly charged Gln-tRNA(Gln) through the transamidation of misacylated Glu-tRNA(Gln) in organisms which lack glutaminyl-tRNA synthetase. The reaction takes place in the presence of glutamine and ATP through an activated gamma-phospho-Glu-tRNA(Gln). The GatDE system is specific for glutamate and does not act on aspartate. This is Glutamyl-tRNA(Gln) amidotransferase subunit E from Pyrobaculum calidifontis (strain DSM 21063 / JCM 11548 / VA1).